The following is a 403-amino-acid chain: Probable tRNA sulfurtransferase (403 aa).

Positions 61–166 (EAIAESLKDV…SGYSYIMCDE (106 aa)) constitute a THUMP domain. Residues 184 to 185 (LL), 209 to 210 (HF), Arg266, Gly288, and Gln297 contribute to the ATP site.

Belongs to the ThiI family.

The protein resides in the cytoplasm. It carries out the reaction [ThiI sulfur-carrier protein]-S-sulfanyl-L-cysteine + a uridine in tRNA + 2 reduced [2Fe-2S]-[ferredoxin] + ATP + H(+) = [ThiI sulfur-carrier protein]-L-cysteine + a 4-thiouridine in tRNA + 2 oxidized [2Fe-2S]-[ferredoxin] + AMP + diphosphate. It catalyses the reaction [ThiS sulfur-carrier protein]-C-terminal Gly-Gly-AMP + S-sulfanyl-L-cysteinyl-[cysteine desulfurase] + AH2 = [ThiS sulfur-carrier protein]-C-terminal-Gly-aminoethanethioate + L-cysteinyl-[cysteine desulfurase] + A + AMP + 2 H(+). The protein operates within cofactor biosynthesis; thiamine diphosphate biosynthesis. Functionally, catalyzes the ATP-dependent transfer of a sulfur to tRNA to produce 4-thiouridine in position 8 of tRNAs, which functions as a near-UV photosensor. Also catalyzes the transfer of sulfur to the sulfur carrier protein ThiS, forming ThiS-thiocarboxylate. This is a step in the synthesis of thiazole, in the thiamine biosynthesis pathway. The sulfur is donated as persulfide by IscS. The sequence is that of Probable tRNA sulfurtransferase from Bacillus cytotoxicus (strain DSM 22905 / CIP 110041 / 391-98 / NVH 391-98).